The primary structure comprises 416 residues: Prostacyclin receptor (416 aa).

Over 1–45 (MVASGGRPDGPPSITPESPLIVGGREWQGMAGSCWNITYVQDSVG) the chain is Extracellular. 2 disulfide bridges follow: cysteine 34–cysteine 194 and cysteine 121–cysteine 199. A glycan (N-linked (GlcNAc...) asparagine) is linked at asparagine 36. Residues 46–67 (PATSTLMFVAGVVGNGLALGIL) form a helical membrane-spanning segment. The Cytoplasmic segment spans residues 68 to 80 (GARRRSHPSAFAV). Residues 81 to 105 (LVTGLAVTDLLGTCFLSPAVFVAYA) traverse the membrane as a helical segment. At 106 to 123 (RNSSLLGLAHGGTMLCDT) the chain is on the extracellular side. Residues 124–144 (FAFAMTFFGLASTLILFAMAV) form a helical membrane-spanning segment. The Cytoplasmic portion of the chain corresponds to 145–163 (ERCLALSHPYLYAQLDGPR). The helical transmembrane segment at 164–187 (CARLALPAIYAFCCLFCSLPLLGL) threads the bilayer. Over 188 to 215 (GEHQQYCPGSWCFIRMRSPQPGGCAFSL) the chain is Extracellular. A helical membrane pass occupies residues 216–237 (AYASLMALLVTSIFFCNGSVTL). At 238 to 264 (SLCHMYRQQRRHHGSFVPTSRAREDEV) the chain is on the cytoplasmic side. The helical transmembrane segment at 265–289 (YHLILLALMTGIMAVCSLPLTIRGF) threads the bilayer. Topologically, residues 290–302 (TQAIAPDSREMGD) are extracellular. The chain crosses the membrane as a helical span at residues 303–323 (LHAFRFNAFNPILDPWVFILF). Over 324 to 416 (RKAVFQRLKF…TEAVVACSLC (93 aa)) the chain is Cytoplasmic. The residue at position 366 (serine 366) is a Phosphoserine. Position 413 is a cysteine methyl ester (cysteine 413). Cysteine 413 is lipidated: S-farnesyl cysteine. Residues 414–416 (SLC) constitute a propeptide, removed in mature form.

It belongs to the G-protein coupled receptor 1 family. As to quaternary structure, interacts (non-isoprenylated C-terminus) with PDZK1. Post-translationally, isoprenylation does not influence ligand binding but is required for efficient coupling to the effectors adenylyl cyclase and phospholipase C.

It is found in the cell membrane. Receptor for prostacyclin (prostaglandin I2 or PGI2). The activity of this receptor is mediated by G(s) proteins which activate adenylate cyclase. The polypeptide is Prostacyclin receptor (Ptgir) (Rattus norvegicus (Rat)).